Consider the following 334-residue polypeptide: Heat-inducible transcription repressor HrcA (334 aa).

Belongs to the HrcA family.

In terms of biological role, negative regulator of class I heat shock genes (grpE-dnaK-dnaJ and groELS operons). Prevents heat-shock induction of these operons. The protein is Heat-inducible transcription repressor HrcA of Verminephrobacter eiseniae (strain EF01-2).